The sequence spans 384 residues: tRNA(Met) cytidine acetate ligase (384 aa).

ATP is bound by residues 7 to 20, glycine 101, asparagine 153, and arginine 178; that span reads VAEY…HEFL.

Belongs to the TmcAL family.

It is found in the cytoplasm. It catalyses the reaction cytidine(34) in elongator tRNA(Met) + acetate + ATP = N(4)-acetylcytidine(34) in elongator tRNA(Met) + AMP + diphosphate. Its function is as follows. Catalyzes the formation of N(4)-acetylcytidine (ac(4)C) at the wobble position of elongator tRNA(Met), using acetate and ATP as substrates. First activates an acetate ion to form acetyladenylate (Ac-AMP) and then transfers the acetyl group to tRNA to form ac(4)C34. The polypeptide is tRNA(Met) cytidine acetate ligase (Lactobacillus delbrueckii subsp. bulgaricus (strain ATCC 11842 / DSM 20081 / BCRC 10696 / JCM 1002 / NBRC 13953 / NCIMB 11778 / NCTC 12712 / WDCM 00102 / Lb 14)).